Reading from the N-terminus, the 109-residue chain is Spermidine export protein MdtI (109 aa).

The next 4 membrane-spanning stretches (helical) occupy residues 6–26 (WWHAAFLFLAVVLDILANILL), 36–56 (WMGILSLIAVLGAFSALAQAV), 63–83 (IAYALWGAFGIIATVAAGWIM), and 88–108 (LNYKGWGGIALLLLGMVMIKM).

It belongs to the drug/metabolite transporter (DMT) superfamily. Small multidrug resistance (SMR) (TC 2.A.7.1) family. MdtI subfamily. Forms a complex with MdtJ.

It localises to the cell inner membrane. Catalyzes the excretion of spermidine. This is Spermidine export protein MdtI from Photorhabdus laumondii subsp. laumondii (strain DSM 15139 / CIP 105565 / TT01) (Photorhabdus luminescens subsp. laumondii).